A 219-amino-acid polypeptide reads, in one-letter code: Phosphatidylserine decarboxylase proenzyme (219 aa).

Serine 188 functions as the Schiff-base intermediate with substrate; via pyruvic acid in the catalytic mechanism. The residue at position 188 (serine 188) is a Pyruvic acid (Ser); by autocatalysis.

It belongs to the phosphatidylserine decarboxylase family. PSD-A subfamily. Heterodimer of a large membrane-associated beta subunit and a small pyruvoyl-containing alpha subunit. It depends on pyruvate as a cofactor. Is synthesized initially as an inactive proenzyme. Formation of the active enzyme involves a self-maturation process in which the active site pyruvoyl group is generated from an internal serine residue via an autocatalytic post-translational modification. Two non-identical subunits are generated from the proenzyme in this reaction, and the pyruvate is formed at the N-terminus of the alpha chain, which is derived from the carboxyl end of the proenzyme. The post-translation cleavage follows an unusual pathway, termed non-hydrolytic serinolysis, in which the side chain hydroxyl group of the serine supplies its oxygen atom to form the C-terminus of the beta chain, while the remainder of the serine residue undergoes an oxidative deamination to produce ammonia and the pyruvoyl prosthetic group on the alpha chain.

The protein localises to the cell membrane. It catalyses the reaction a 1,2-diacyl-sn-glycero-3-phospho-L-serine + H(+) = a 1,2-diacyl-sn-glycero-3-phosphoethanolamine + CO2. The protein operates within phospholipid metabolism; phosphatidylethanolamine biosynthesis; phosphatidylethanolamine from CDP-diacylglycerol: step 2/2. Its function is as follows. Catalyzes the formation of phosphatidylethanolamine (PtdEtn) from phosphatidylserine (PtdSer). This chain is Phosphatidylserine decarboxylase proenzyme, found in Ruegeria pomeroyi (strain ATCC 700808 / DSM 15171 / DSS-3) (Silicibacter pomeroyi).